Consider the following 317-residue polypeptide: GPI-specific phospholipase A2-like PGAP3 (317 aa).

The signal sequence occupies residues 1–18 (MAPFLVLFLAGVVSASRG). Residues 19 to 93 (DREPVYRDCV…QFHGKWPFSR (75 aa)) lie on the Lumenal side of the membrane. N-linked (GlcNAc...) asparagine glycosylation is present at Asn35. The chain crosses the membrane as a helical span at residues 94 to 114 (FLFFQEPASALASFLNGVASL). Over 115–132 (LMLFRYRSSVPSSCQMYR) the chain is Cytoplasmic. Residues 133 to 153 (TCLAFSMVSVNAWFWSTIFHT) form a helical membrane-spanning segment. Residues 154 to 163 (RDTALTEKMD) lie on the Lumenal side of the membrane. Residues 164–180 (YFCASSVILHSIYLCCM) form a helical membrane-spanning segment. Over 181 to 189 (RTFGLQYPS) the chain is Cytoplasmic. The chain crosses the membrane as a helical span at residues 190-210 (IANAFGAFLVLLFACHISYLT). Residues 211–219 (LGRFDYSYN) are Lumenal-facing. The chain crosses the membrane as a helical span at residues 220 to 240 (MAANTSFGIVNLMWWLAWCMW). The Cytoplasmic segment spans residues 241 to 251 (RRFHQPYLWKC). Residues 252–272 (VLVVVLLQSLALLELLDFPPV) form a helical membrane-spanning segment. Met273 is a topological domain (lumenal). The helical transmembrane segment at 274-293 (WILDAHALWHFSTIPLHFLF) threads the bilayer. Residues 294-317 (YSFLRDDSLYLLKVNHDDDIPKLD) lie on the Cytoplasmic side of the membrane.

It belongs to the PGAP3 family.

It is found in the golgi apparatus membrane. Its function is as follows. Involved in the fatty acid remodeling steps of GPI-anchor maturation where the unsaturated acyl chain at sn-2 of inositol phosphate is replaced by a saturated stearoyl chain. May catalyze the first step of the fatty acid remodeling, by removing the unsaturated acyl chain at sn-2 of inositol phosphate, generating a lyso-GPI intermediate. The fatty acid remodeling steps is critical for the integration of GPI-APs into lipid rafts. This is GPI-specific phospholipase A2-like PGAP3 from Xenopus laevis (African clawed frog).